Consider the following 110-residue polypeptide: MVRTKANYVPGAYRKVVASQAPRKVLGSSTFVTNSSGSSRKAENKYAGGNPVCVRPTPKWQKGIGEFFRLSPKDSKKENQIPEEAGSSGLGKAKRKACPLQPDHRDDENE.

Lys15 is covalently cross-linked (Glycyl lysine isopeptide (Lys-Gly) (interchain with G-Cter in ubiquitin)). The short motif at 23-34 is the D-box element; sequence RKVLGSSTFVTN. Lys24 carries the N6-acetyllysine; alternate modification. Lys24 participates in a covalent cross-link: Glycyl lysine isopeptide (Lys-Gly) (interchain with G-Cter in ubiquitin); alternate. Residue Ser28 is modified to Phosphoserine. The span at 29-39 shows a compositional bias: low complexity; that stretch reads STFVTNSSGSS. The interval 29–110 is disordered; the sequence is STFVTNSSGS…QPDHRDDENE (82 aa). The PIP-box motif lies at 61-71; the sequence is QKGIGEFFRLS. Ser71 carries the phosphoserine modification. Over residues 71-80 the composition is skewed to basic and acidic residues; it reads SPKDSKKENQ. Residues 77-79 carry the KEN box motif; sequence KEN. An Initiation motif motif is present at residues 84–96; it reads EAGSSGLGKAKRK.

In terms of assembly, interacts (when monoubiquitinated at Lys-15 and Lys-24) with PCNA. Interacts with isoform 2/p33ING1b of ING1. Interacts with BRCA1. Post-translationally, monoubiquitinated at Lys-15 and Lys-24 during normal S phase, promoting its association with PCNA. Also diubiquitinated at these 2 sites. Following DNA damage, monoubiquitin chains at Lys-15 and Lys-24 are probably extended, leading to disrupt the interaction with PCNA. Polyubiquitinated by the APC/C complex at the mitotic exit, leading to its degradation by the proteasome.

It localises to the nucleus. The protein localises to the cytoplasm. The protein resides in the perinuclear region. Functionally, PCNA-binding protein that acts as a regulator of DNA repair during DNA replication. Following DNA damage, the interaction with PCNA is disrupted, facilitating the interaction between monoubiquitinated PCNA and the translesion DNA synthesis DNA polymerase eta (POLH) at stalled replisomes, facilitating the bypass of replication-fork-blocking lesions. Also acts as a regulator of centrosome number. The sequence is that of PCNA-associated factor from Rattus norvegicus (Rat).